A 156-amino-acid polypeptide reads, in one-letter code: Ribosomal RNA large subunit methyltransferase H (156 aa).

Residues Leu73, Gly104, and 123-128 (LSPLTL) contribute to the S-adenosyl-L-methionine site.

Belongs to the RNA methyltransferase RlmH family. As to quaternary structure, homodimer.

It is found in the cytoplasm. It carries out the reaction pseudouridine(1915) in 23S rRNA + S-adenosyl-L-methionine = N(3)-methylpseudouridine(1915) in 23S rRNA + S-adenosyl-L-homocysteine + H(+). Specifically methylates the pseudouridine at position 1915 (m3Psi1915) in 23S rRNA. This Aliivibrio salmonicida (strain LFI1238) (Vibrio salmonicida (strain LFI1238)) protein is Ribosomal RNA large subunit methyltransferase H.